A 136-amino-acid polypeptide reads, in one-letter code: Acyl carrier protein 1, chloroplastic (136 aa).

Residues 1–52 (MASVTGTSISMASFKASLAPSRVSNLRSVSLPIKGKSFAPLRMRSARFVVCC) constitute a chloroplast transit peptide. The 76-residue stretch at 56–131 (PETVEKVCAI…DAADLIEKLI (76 aa)) folds into the Carrier domain. S91 is modified (O-(pantetheine 4'-phosphoryl)serine).

Belongs to the acyl carrier protein (ACP) family. Post-translationally, 4'-phosphopantetheine is transferred from CoA to a specific serine of apo-ACP by acpS. This modification is essential for activity because fatty acids are bound in thioester linkage to the sulfhydryl of the prosthetic group.

The protein localises to the plastid. It localises to the chloroplast. It functions in the pathway lipid metabolism; fatty acid biosynthesis. Functionally, carrier of the growing fatty acid chain in fatty acid biosynthesis. The polypeptide is Acyl carrier protein 1, chloroplastic (ACP1) (Casuarina glauca (Swamp oak)).